A 296-amino-acid chain; its full sequence is Ribosomal RNA small subunit methyltransferase A (296 aa).

Asn28, Leu30, Gly55, Glu77, Asp103, and Asn122 together coordinate S-adenosyl-L-methionine.

Belongs to the class I-like SAM-binding methyltransferase superfamily. rRNA adenine N(6)-methyltransferase family. RsmA subfamily.

It is found in the cytoplasm. The enzyme catalyses adenosine(1518)/adenosine(1519) in 16S rRNA + 4 S-adenosyl-L-methionine = N(6)-dimethyladenosine(1518)/N(6)-dimethyladenosine(1519) in 16S rRNA + 4 S-adenosyl-L-homocysteine + 4 H(+). In terms of biological role, specifically dimethylates two adjacent adenosines (A1518 and A1519) in the loop of a conserved hairpin near the 3'-end of 16S rRNA in the 30S particle. May play a critical role in biogenesis of 30S subunits. This Sinorhizobium fredii (strain NBRC 101917 / NGR234) protein is Ribosomal RNA small subunit methyltransferase A.